Reading from the N-terminus, the 401-residue chain is Probable tRNA sulfurtransferase (401 aa).

The region spanning 60-165 (EALFPHLKQV…EEATFLTIRD (106 aa)) is the THUMP domain. Residues 183–184 (ML), 208–209 (HF), arginine 265, glycine 287, and glutamine 296 each bind ATP.

This sequence belongs to the ThiI family.

The protein resides in the cytoplasm. It catalyses the reaction [ThiI sulfur-carrier protein]-S-sulfanyl-L-cysteine + a uridine in tRNA + 2 reduced [2Fe-2S]-[ferredoxin] + ATP + H(+) = [ThiI sulfur-carrier protein]-L-cysteine + a 4-thiouridine in tRNA + 2 oxidized [2Fe-2S]-[ferredoxin] + AMP + diphosphate. The enzyme catalyses [ThiS sulfur-carrier protein]-C-terminal Gly-Gly-AMP + S-sulfanyl-L-cysteinyl-[cysteine desulfurase] + AH2 = [ThiS sulfur-carrier protein]-C-terminal-Gly-aminoethanethioate + L-cysteinyl-[cysteine desulfurase] + A + AMP + 2 H(+). It participates in cofactor biosynthesis; thiamine diphosphate biosynthesis. Catalyzes the ATP-dependent transfer of a sulfur to tRNA to produce 4-thiouridine in position 8 of tRNAs, which functions as a near-UV photosensor. Also catalyzes the transfer of sulfur to the sulfur carrier protein ThiS, forming ThiS-thiocarboxylate. This is a step in the synthesis of thiazole, in the thiamine biosynthesis pathway. The sulfur is donated as persulfide by IscS. In Bacillus subtilis (strain 168), this protein is Probable tRNA sulfurtransferase.